The sequence spans 361 residues: MKESVVRKLEHLVERFEEVQALLGDPEVIGDQDKFRNLSKEFSQLEDVVAGFNAYQQAQENLASAQEMLNEDDAEMREMAQEEMKEAKGEIERLETELQVLLLPKDPNDDNNCFLEIRAGAGGDEAAIFAGDLFRMYSRYAESRGWRVELVNANESEHGGYKEVVANVSGDGVYGVLKFESGGHRVQRVPETESQGRIHTSACTVAVLPEIPESEAIEINPAELRIDTFRASGAGGQHVNKTDSAIRITHLPTGLVVECQDERSQHKNRAKAMSVLQARLNQIEEEKRAAEEASTRKSLVGSGDRSERIRTYNFPQGRVTDHRINLTIYRLDEVVEGDLKQLVDPILQEHQADLLASLSDE.

At glutamine 237 the chain carries N5-methylglutamine. The interval 287–306 (KRAAEEASTRKSLVGSGDRS) is disordered.

The protein belongs to the prokaryotic/mitochondrial release factor family. Methylated by PrmC. Methylation increases the termination efficiency of RF1.

The protein localises to the cytoplasm. In terms of biological role, peptide chain release factor 1 directs the termination of translation in response to the peptide chain termination codons UAG and UAA. The sequence is that of Peptide chain release factor 1 from Alteromonas mediterranea (strain DSM 17117 / CIP 110805 / LMG 28347 / Deep ecotype).